The primary structure comprises 379 residues: Cytochrome b (379 aa).

Transmembrane regions (helical) follow at residues F33–M53, W77–I98, W113–L133, and F178–L198. 2 residues coordinate heme b: H83 and H97. Heme b-binding residues include H182 and H196. Residue H201 participates in a ubiquinone binding. Transmembrane regions (helical) follow at residues Y226–Y246, L288–H308, A320–G340, and Y347–P367.

It belongs to the cytochrome b family. As to quaternary structure, the cytochrome bc1 complex contains 3 respiratory subunits (MT-CYB, CYC1 and UQCRFS1), 2 core proteins (UQCRC1 and UQCRC2) and probably 6 low-molecular weight proteins. It depends on heme b as a cofactor.

It localises to the mitochondrion inner membrane. Component of the ubiquinol-cytochrome c reductase complex (complex III or cytochrome b-c1 complex) that is part of the mitochondrial respiratory chain. The b-c1 complex mediates electron transfer from ubiquinol to cytochrome c. Contributes to the generation of a proton gradient across the mitochondrial membrane that is then used for ATP synthesis. The sequence is that of Cytochrome b (mt-cyb) from Anguilla anguilla (European freshwater eel).